The primary structure comprises 1088 residues: MRFCFDRLCFATKRPAQNSNSNAPHSSTTVDAPPRPADVDVATVPVATPAPPPQQPVSNLFYADYQKLQPAIIDRDWERDRDTDTDTRSEAKPPDIVEHIEPVEEQRQIHTQIQSPAEIQIQIPPTPPAPSIQIQIQQRYRRHSSAEDRNLNTRRNDSNITEALRKAASMQQEPNANYQFPTDLGLVSIVNNNNNTNTHPSGSNSGSNNNSNINNNLVGGIVTLPAAGGLIGLEHTASGLRLIPAPPTHSDVLTHTLIYGTPPSGAQQLNQDPRSLLHQQELQLQQRYQQLQQLQAQTQGLYTSQGSPVLYHQPSPGSSQPVAIPGATCHSPTQLQPPNTLNLQQQMQSLRISGCTPSGTGGSATPSPVGLVDPNFIVSNYVAASPQEERFIQIIQAKELKIQEMQRALQFKDNEIAELKSHLDKFQSVFPFSRGSAAGCAGTGGASGSGAGGSGGSGPGTATGATRKSGQNFQRQRALGISAEPQSESSLLLEHVSFPKYDKDERSRELIKAAILDNDFMKNLDLTQIREIVDCMYPVKYPAKNLIIKEGDVGSIVYVMEDGRVEVSREGKYLSTLSGAKVLGELAILYNCQRTATITAITECNLWAIERQCFQTIMMRTGLIRQAEYSDFLKSVPIFKDLAEDTLIKISDVLEETHYQRGDYIVRQGARGDTFFIISKGKVRVTIKQQDTQEEKFIRMLGKGDFFGEKALQGDDLRTANIICESADGVSCLVIDRETFNQLISNLDEIKHRYDDEGAMERRKINEEFRDINLTDLRVIATLGVGGFGRVELVQTNGDSSRSFALKQMKKSQIVETRQQQHIMSEKEIMGEANCQFIVKLFKTFKDKKYLYMLMESCLGGELWTILRDKGNFDDSTTRFYTACVVEAFDYLHSRNIIYRDLKPENLLLNERGYVKLVDFGFAKKLQTGRKTWTFCGTPEYVAPEVILNRGHDISADYWSLGVLMFELLTGTPPFTGSDPMRTYNIILKGIDAIEFPRNITRNASNLIKKLCRDNPAERLGYQRGGISEIQKHKWFDGFYWWGLQNCTLEPPIKPAVKSVVDTTNFDDYPPDPEGPPPDDVTGWDKDF.

The dimerization stretch occupies residues 1–69; sequence MRFCFDRLCF…LFYADYQKLQ (69 aa). The segment covering 15-28 has biased composition (polar residues); sequence PAQNSNSNAPHSST. Disordered stretches follow at residues 15-39, 128-158, 191-211, 305-336, and 441-477; these read PAQNSNSNAPHSSTTVDAPPRPADV, PAPSIQIQIQQRYRRHSSAEDRNLNTRRNDS, NNNNNTNTHPSGSNSGSNNNS, QGSPVLYHQPSPGSSQPVAIPGATCHSPTQLQ, and AGTGGASGSGAGGSGGSGPGTATGATRKSGQNFQRQR. Residues 70-528 form a regulatory region; it reads PAIIDRDWER…DFMKNLDLTQ (459 aa). Residues 144 to 157 are compositionally biased toward basic and acidic residues; the sequence is SSAEDRNLNTRRND. The span at 441–461 shows a compositional bias: gly residues; the sequence is AGTGGASGSGAGGSGGSGPGT. 3',5'-cyclic GMP contacts are provided by residues 584 to 587, 594 to 595, Arg699, 708 to 711, and 718 to 719; these read GELA, RT, and GEKA. The Protein kinase domain maps to 777-1036; sequence LRVIATLGVG…ISEIQKHKWF (260 aa). ATP contacts are provided by residues 783-791 and Lys807; that span reads LGVGGFGRV. Asp901 (proton acceptor) is an active-site residue. Thr934 and Thr938 each carry phosphothreonine. The AGC-kinase C-terminal domain maps to 1037–1088; sequence DGFYWWGLQNCTLEPPIKPAVKSVVDTTNFDDYPPDPEGPPPDDVTGWDKDF. The tract at residues 1064 to 1088 is disordered; sequence TNFDDYPPDPEGPPPDDVTGWDKDF.

The protein belongs to the protein kinase superfamily. AGC Ser/Thr protein kinase family. cGMP subfamily.

It carries out the reaction L-seryl-[protein] + ATP = O-phospho-L-seryl-[protein] + ADP + H(+). The enzyme catalyses L-threonyl-[protein] + ATP = O-phospho-L-threonyl-[protein] + ADP + H(+). This chain is cGMP-dependent protein kinase, isozyme 2 forms cD4/T1/T3A/T3B (for), found in Drosophila melanogaster (Fruit fly).